The following is a 247-amino-acid chain: V-type proton ATPase subunit D (247 aa).

This sequence belongs to the V-ATPase D subunit family. As to quaternary structure, V-ATPase is a heteromultimeric enzyme made up of two complexes: the ATP-hydrolytic V1 complex and the proton translocation V0 complex. The V1 complex consists of three catalytic AB heterodimers that form a heterohexamer, three peripheral stalks each consisting of EG heterodimers, one central rotor including subunits D and F, and the regulatory subunits C and H. The proton translocation complex V0 consists of the proton transport subunit a, a ring of proteolipid subunits c9c'', rotary subunit d, subunits e and f, and the accessory subunits ATP6AP1/Ac45 and ATP6AP2/PRR. Interacts with SNX10. In terms of tissue distribution, expressed in brain (at protein level). Present in tissues active in secretion. Amounts elevated in brain, kidney and testis.

It is found in the membrane. Its subcellular location is the cytoplasmic vesicle. The protein resides in the clathrin-coated vesicle membrane. The protein localises to the cytoplasm. It localises to the cytoskeleton. It is found in the microtubule organizing center. Its subcellular location is the centrosome. The protein resides in the cell projection. The protein localises to the cilium. Its function is as follows. Subunit of the V1 complex of vacuolar(H+)-ATPase (V-ATPase), a multisubunit enzyme composed of a peripheral complex (V1) that hydrolyzes ATP and a membrane integral complex (V0) that translocates protons. V-ATPase is responsible for acidifying and maintaining the pH of intracellular compartments and in some cell types, is targeted to the plasma membrane, where it is responsible for acidifying the extracellular environment. May play a role in cilium biogenesis through regulation of the transport and the localization of proteins to the cilium. The protein is V-type proton ATPase subunit D (ATP6V1D) of Bos taurus (Bovine).